A 512-amino-acid chain; its full sequence is ATP synthase subunit alpha (512 aa).

169–176 lines the ATP pocket; that stretch reads GDRQTGKT.

Belongs to the ATPase alpha/beta chains family. In terms of assembly, F-type ATPases have 2 components, CF(1) - the catalytic core - and CF(0) - the membrane proton channel. CF(1) has five subunits: alpha(3), beta(3), gamma(1), delta(1), epsilon(1). CF(0) has three main subunits: a(1), b(2) and c(9-12). The alpha and beta chains form an alternating ring which encloses part of the gamma chain. CF(1) is attached to CF(0) by a central stalk formed by the gamma and epsilon chains, while a peripheral stalk is formed by the delta and b chains.

The protein localises to the cell inner membrane. It carries out the reaction ATP + H2O + 4 H(+)(in) = ADP + phosphate + 5 H(+)(out). Its function is as follows. Produces ATP from ADP in the presence of a proton gradient across the membrane. The alpha chain is a regulatory subunit. The polypeptide is ATP synthase subunit alpha (Leptothrix cholodnii (strain ATCC 51168 / LMG 8142 / SP-6) (Leptothrix discophora (strain SP-6))).